A 1353-amino-acid polypeptide reads, in one-letter code: Trifunctional purine biosynthetic protein adenosine-3 (1353 aa).

Residues 114 to 321 (KDFMLRHGIP…LFDVMEACCS (208 aa)) form the ATP-grasp domain. Residues 193-196 (EELL), E200, R223, and N232 each bind ATP. Mg(2+)-binding residues include E291 and N293. Residues 441–1155 (GLSYKDSGVD…QKMLSQRRKR (715 aa)) form an AIRS domain region. S814 and S816 each carry phosphoserine. The interval 1153–1353 (RKRVAVLISG…ALISPEVSSQ (201 aa)) is GART domain. 1164–1166 (GSN) serves as a coordination point for N(1)-(5-phospho-beta-D-ribosyl)glycinamide. (6R)-10-formyltetrahydrofolate-binding positions include R1219, 1244-1247 (MRVL), and N1261. Catalysis depends on H1263, which acts as the Proton donor. 1295–1299 (DEGVD) contributes to the (6R)-10-formyltetrahydrofolate binding site. 1325-1328 (HKAE) contributes to the N(1)-(5-phospho-beta-D-ribosyl)glycinamide binding site.

This sequence in the N-terminal section; belongs to the GARS family. It in the central section; belongs to the AIR synthase family. In the C-terminal section; belongs to the GART family. Homodimer. Mg(2+) is required as a cofactor. The cofactor is Mn(2+).

It carries out the reaction 5-phospho-beta-D-ribosylamine + glycine + ATP = N(1)-(5-phospho-beta-D-ribosyl)glycinamide + ADP + phosphate + H(+). It catalyses the reaction 2-formamido-N(1)-(5-O-phospho-beta-D-ribosyl)acetamidine + ATP = 5-amino-1-(5-phospho-beta-D-ribosyl)imidazole + ADP + phosphate + H(+). The enzyme catalyses N(1)-(5-phospho-beta-D-ribosyl)glycinamide + (6R)-10-formyltetrahydrofolate = N(2)-formyl-N(1)-(5-phospho-beta-D-ribosyl)glycinamide + (6S)-5,6,7,8-tetrahydrofolate + H(+). It participates in purine metabolism; IMP biosynthesis via de novo pathway; 5-amino-1-(5-phospho-D-ribosyl)imidazole from N(2)-formyl-N(1)-(5-phospho-D-ribosyl)glycinamide: step 2/2. It functions in the pathway purine metabolism; IMP biosynthesis via de novo pathway; N(1)-(5-phospho-D-ribosyl)glycinamide from 5-phospho-alpha-D-ribose 1-diphosphate: step 2/2. The protein operates within purine metabolism; IMP biosynthesis via de novo pathway; N(2)-formyl-N(1)-(5-phospho-D-ribosyl)glycinamide from N(1)-(5-phospho-D-ribosyl)glycinamide (10-formyl THF route): step 1/1. Trifunctional enzyme that catalyzes three distinct reactions as part of the 'de novo' inosine monophosphate biosynthetic pathway. This is Trifunctional purine biosynthetic protein adenosine-3 from Drosophila melanogaster (Fruit fly).